The sequence spans 53 residues: MAPEENGTCEPCKTFGQKCSHVVKKQRAKFYILRRCIAMLVCWHDQNHDRKDS.

The N-linked (GlcNAc...) asparagine glycan is linked to Asn-6. The required for DVL/RTFL small polypeptide activity stretch occupies residues 14-45 (TFGQKCSHVVKKQRAKFYILRRCIAMLVCWHD). Residues 30-46 (FYILRRCIAMLVCWHDQ) form a helical membrane-spanning segment.

It belongs to the DVL/RTFL small polypeptides family. In terms of tissue distribution, mostly expressed in stems, flower buds, flowers and seedling shoots, to a lesser extent, in roots and young cauline leaves, but not in mature rosette leaves. Barely observed in cotyledons and leaf primordia.

It localises to the cell membrane. Functionally, small polypeptide acting as a regulatory molecule which coordinates cellular responses required for differentiation, growth and development, probably by restricting polar cell proliferation in lateral organs (e.g. leaves) and coordinating socket cell recruitment and differentiation at trichome sites. Regulates the positional cue and cell proliferation along the body axis. The chain is Small polypeptide DEVIL 16 from Arabidopsis thaliana (Mouse-ear cress).